A 150-amino-acid polypeptide reads, in one-letter code: Arginine repressor (150 aa).

It belongs to the ArgR family.

The protein localises to the cytoplasm. Its pathway is amino-acid biosynthesis; L-arginine biosynthesis [regulation]. Functionally, regulates arginine biosynthesis genes. The chain is Arginine repressor from Staphylococcus haemolyticus (strain JCSC1435).